Reading from the N-terminus, the 62-residue chain is Temporin-La (62 aa).

The first 22 residues, 1 to 22 (MFPLKKSLLLLFFLGTINLSFC), serve as a signal peptide directing secretion. Positions 23 to 47 (EEERDVDQDERRDDPGERNVQVEKR) are excised as a propeptide. Position 60 is a leucine amide (L60).

Belongs to the frog skin active peptide (FSAP) family. Temporin subfamily. In terms of tissue distribution, expressed by the skin glands.

The protein localises to the secreted. It localises to the target cell membrane. Its function is as follows. Antimicrobial peptide with amphipathic alpha-helical structure that acts against both Gram-positive and Gram-negative bacteria and the fungus Candida albicans. Is active against S.aureus ATCC 25923 (MIC=2.5 ug/ml), S.suis 2 CVCC 606 (MIC=15.6 ug/ml), Salmonella ATCC 20020 (MIC=15.6 ug/ml), P.aeruginosa ATCC 227853 (MIC=60 ug/ml), and C.albicans ATCC10231 (MIC=31.25 ug/ml). Is not active against B.subtilis ADB403, E.coli ATCC 25922, and K.pneumoniae ATCC 700603. Also shows a strong antitumor activity, but no hemolytic activity. This chain is Temporin-La, found in Aquarana catesbeiana (American bullfrog).